Reading from the N-terminus, the 225-residue chain is Dehydrin DHN4 (225 aa).

Residues 1-78 (MEYQGQQHGR…EDDGMGGRRK (78 aa)) are disordered. Gly residues predominate over residues 21-39 (HGVGTGMGTHGGVGTGAAA). Repeat copies occupy residues 105–118 (YGQQGTGMAGTGGT), 119–136 (YGQQGHTGMTGMGATDGT), 137–159 (YGQQGHTGMAGTGAHGTAATGGT), 160–178 (YGQQGHTGMTGTGMHGTGG), and 179–199 (TYGQQGHTGMTGTGMHGTGGT). The segment at 105-199 (YGQQGTGMAG…GTGMHGTGGT (95 aa)) is 5 X approximate tandem repeats.

It belongs to the plant dehydrin family.

This chain is Dehydrin DHN4 (DHN4), found in Hordeum vulgare (Barley).